Here is a 332-residue protein sequence, read N- to C-terminus: Cilia- and flagella-associated protein 119 (332 aa).

Residues 1–10 show a composition bias toward polar residues; sequence MITPRSSQSL. Disordered regions lie at residues 1–70, 246–271, and 308–332; these read MITP…ANLF, EDEE…EAEQ, and RLSN…SKAK. The span at 14 to 30 shows a compositional bias: basic and acidic residues; it reads VQTELEHSPKLQEEPDR. Over residues 49–58 the composition is skewed to polar residues; it reads ESPAEATSSP. Residues 287–308 are a coiled coil; the sequence is LNKELRQLQQLVEERLKESEER.

In terms of tissue distribution, specifically expressed in testis (at protein level).

The protein localises to the cell projection. It localises to the cilium. Its subcellular location is the flagellum. It is found in the cytoplasmic vesicle. The protein resides in the secretory vesicle. The protein localises to the acrosome. It localises to the cytoplasm. The protein is Cilia- and flagella-associated protein 119 of Rattus norvegicus (Rat).